The sequence spans 132 residues: Small ribosomal subunit protein uS8 (132 aa).

The protein belongs to the universal ribosomal protein uS8 family. Part of the 30S ribosomal subunit. Contacts proteins S5 and S12.

One of the primary rRNA binding proteins, it binds directly to 16S rRNA central domain where it helps coordinate assembly of the platform of the 30S subunit. This is Small ribosomal subunit protein uS8 from Staphylococcus saprophyticus subsp. saprophyticus (strain ATCC 15305 / DSM 20229 / NCIMB 8711 / NCTC 7292 / S-41).